The chain runs to 249 residues: Ditrans,polycis-undecaprenyl-diphosphate synthase ((2E,6E)-farnesyl-diphosphate specific) (249 aa).

The active site involves D29. Position 29 (D29) interacts with Mg(2+). Residues 30 to 33 (GNGR), W34, R42, H46, and 74 to 76 (STE) each bind substrate. The Proton acceptor role is filled by N77. Residues W78, R80, R197, and 203–205 (RLS) each bind substrate. Residue E216 participates in Mg(2+) binding.

It belongs to the UPP synthase family. As to quaternary structure, homodimer. The cofactor is Mg(2+).

It catalyses the reaction 8 isopentenyl diphosphate + (2E,6E)-farnesyl diphosphate = di-trans,octa-cis-undecaprenyl diphosphate + 8 diphosphate. In terms of biological role, generates ditrans,octacis-undecaprenyl pyrophosphate (UPP) from isopentenyl pyrophosphate (IPP) and farnesyl diphosphate. UPP is the precursor of glycosyl carrier lipid in the biosynthesis of bacterial cell wall polysaccharide components such as peptidoglycan and lipopolysaccharide. The chain is Ditrans,polycis-undecaprenyl-diphosphate synthase ((2E,6E)-farnesyl-diphosphate specific) (uppS) from Micrococcus luteus (Micrococcus lysodeikticus).